The chain runs to 272 residues: Octanoyltransferase (272 aa).

The span at 1-12 shows a compositional bias: polar residues; that stretch reads MQQDPPTSQPHT. A disordered region spans residues 1–20; it reads MQQDPPTSQPHTPQIVDGVK. The 191-residue stretch at 65 to 255 folds into the BPL/LPL catalytic domain; it reads HQRPNTVIYV…EMMSFQPYEM (191 aa). Substrate-binding positions include 103-110, 175-177, and 188-190; these read RGGEITWH, AIG, and GFA. C206 serves as the catalytic Acyl-thioester intermediate.

This sequence belongs to the LipB family.

It is found in the cytoplasm. The enzyme catalyses octanoyl-[ACP] + L-lysyl-[protein] = N(6)-octanoyl-L-lysyl-[protein] + holo-[ACP] + H(+). Its pathway is protein modification; protein lipoylation via endogenous pathway; protein N(6)-(lipoyl)lysine from octanoyl-[acyl-carrier-protein]: step 1/2. Functionally, catalyzes the transfer of endogenously produced octanoic acid from octanoyl-acyl-carrier-protein onto the lipoyl domains of lipoate-dependent enzymes. Lipoyl-ACP can also act as a substrate although octanoyl-ACP is likely to be the physiological substrate. The protein is Octanoyltransferase of Cutibacterium acnes (strain DSM 16379 / KPA171202) (Propionibacterium acnes).